A 235-amino-acid chain; its full sequence is Octanoyltransferase (235 aa).

Residues 28–203 enclose the BPL/LPL catalytic domain; the sequence is GRAEETLLLL…PFAGLPADAL (176 aa). Substrate contacts are provided by residues 66 to 73, 133 to 135, and 146 to 148; these read RGGDVTWH, SIG, and GFA. The active-site Acyl-thioester intermediate is the Cys164. Positions 202–235 are disordered; that stretch reads ALPEQPRDAVQPSSCDDVHAPSTTSRRPPCPLTV.

This sequence belongs to the LipB family.

The protein resides in the cytoplasm. The catalysed reaction is octanoyl-[ACP] + L-lysyl-[protein] = N(6)-octanoyl-L-lysyl-[protein] + holo-[ACP] + H(+). The protein operates within protein modification; protein lipoylation via endogenous pathway; protein N(6)-(lipoyl)lysine from octanoyl-[acyl-carrier-protein]: step 1/2. Functionally, catalyzes the transfer of endogenously produced octanoic acid from octanoyl-acyl-carrier-protein onto the lipoyl domains of lipoate-dependent enzymes. Lipoyl-ACP can also act as a substrate although octanoyl-ACP is likely to be the physiological substrate. This chain is Octanoyltransferase, found in Geobacter sulfurreducens (strain ATCC 51573 / DSM 12127 / PCA).